A 159-amino-acid polypeptide reads, in one-letter code: Phosphopantetheine adenylyltransferase (159 aa).

T10 contributes to the substrate binding site. ATP is bound by residues T10–F11 and H18. Substrate-binding residues include K42, M74, and R88. ATP is bound by residues G89–R91, E99, and W124–S130.

It belongs to the bacterial CoaD family. As to quaternary structure, homohexamer. The cofactor is Mg(2+).

Its subcellular location is the cytoplasm. It catalyses the reaction (R)-4'-phosphopantetheine + ATP + H(+) = 3'-dephospho-CoA + diphosphate. It functions in the pathway cofactor biosynthesis; coenzyme A biosynthesis; CoA from (R)-pantothenate: step 4/5. In terms of biological role, reversibly transfers an adenylyl group from ATP to 4'-phosphopantetheine, yielding dephospho-CoA (dPCoA) and pyrophosphate. This chain is Phosphopantetheine adenylyltransferase, found in Escherichia coli (strain UTI89 / UPEC).